Here is a 479-residue protein sequence, read N- to C-terminus: Bifunctional protein HldE (479 aa).

Residues 1–319 form a ribokinase region; that stretch reads MTVILPDFLK…NVVQKYEYTK (319 aa). 195–198 contacts ATP; the sequence is NMSE. Asp264 is a catalytic residue. Residues 346 to 479 form a cytidylyltransferase region; that stretch reads MTNGVFDILH…IDTMEINEIN (134 aa).

In the N-terminal section; belongs to the carbohydrate kinase PfkB family. It in the C-terminal section; belongs to the cytidylyltransferase family. In terms of assembly, homodimer.

The enzyme catalyses D-glycero-beta-D-manno-heptose 7-phosphate + ATP = D-glycero-beta-D-manno-heptose 1,7-bisphosphate + ADP + H(+). The catalysed reaction is D-glycero-beta-D-manno-heptose 1-phosphate + ATP + H(+) = ADP-D-glycero-beta-D-manno-heptose + diphosphate. It functions in the pathway nucleotide-sugar biosynthesis; ADP-L-glycero-beta-D-manno-heptose biosynthesis; ADP-L-glycero-beta-D-manno-heptose from D-glycero-beta-D-manno-heptose 7-phosphate: step 1/4. The protein operates within nucleotide-sugar biosynthesis; ADP-L-glycero-beta-D-manno-heptose biosynthesis; ADP-L-glycero-beta-D-manno-heptose from D-glycero-beta-D-manno-heptose 7-phosphate: step 3/4. Its function is as follows. Catalyzes the phosphorylation of D-glycero-D-manno-heptose 7-phosphate at the C-1 position to selectively form D-glycero-beta-D-manno-heptose-1,7-bisphosphate. Functionally, catalyzes the ADP transfer from ATP to D-glycero-beta-D-manno-heptose 1-phosphate, yielding ADP-D-glycero-beta-D-manno-heptose. This chain is Bifunctional protein HldE, found in Blochmanniella floridana.